Consider the following 451-residue polypeptide: Probable gamma-glutamyl phosphate reductase (451 aa).

This sequence belongs to the gamma-glutamyl phosphate reductase family.

It carries out the reaction L-glutamate 5-semialdehyde + phosphate + NADP(+) = L-glutamyl 5-phosphate + NADPH + H(+). It functions in the pathway amino-acid biosynthesis; L-proline biosynthesis; L-glutamate 5-semialdehyde from L-glutamate: step 2/2. Catalyzes the NADPH dependent reduction of L-gamma-glutamyl 5-phosphate into L-glutamate 5-semialdehyde and phosphate. The product spontaneously undergoes cyclization to form 1-pyrroline-5-carboxylate. The protein is Probable gamma-glutamyl phosphate reductase (pro1) of Schizosaccharomyces pombe (strain 972 / ATCC 24843) (Fission yeast).